The sequence spans 148 residues: Large ribosomal subunit protein bL9 (148 aa).

Belongs to the bacterial ribosomal protein bL9 family.

Functionally, binds to the 23S rRNA. This chain is Large ribosomal subunit protein bL9, found in Geobacter sulfurreducens (strain ATCC 51573 / DSM 12127 / PCA).